The following is a 361-amino-acid chain: Hydroxycarboxylate dehydrogenase B (361 aa).

Residues His48, 122-124 (GRI), 178-182 (LLDYA), His234, Asn270, and 313-316 (GEWE) contribute to the NAD(+) site.

The protein belongs to the LDH2/MDH2 oxidoreductase family.

The catalysed reaction is 2-hydroxyglutarate + NADP(+) = 2-oxoglutarate + NADPH + H(+). It catalyses the reaction 2-hydroxyglutarate + NAD(+) = 2-oxoglutarate + NADH + H(+). It carries out the reaction 3-phenyllactate + NADP(+) = 3-phenylpyruvate + NADPH + H(+). The enzyme catalyses 3-phenyllactate + NAD(+) = 3-phenylpyruvate + NADH + H(+). The catalysed reaction is (2R)-2-hydroxy-3-(4-hydroxyphenyl)propanoate + NAD(+) = 3-(4-hydroxyphenyl)pyruvate + NADH + H(+). It catalyses the reaction (2R)-2-hydroxy-3-(4-hydroxyphenyl)propanoate + NADP(+) = 3-(4-hydroxyphenyl)pyruvate + NADPH + H(+). It carries out the reaction (2R)-3-(3,4-dihydroxyphenyl)lactate + NADP(+) = 3-(3,4-dihydroxyphenyl)pyruvate + NADPH + H(+). The enzyme catalyses (2R)-3-(3,4-dihydroxyphenyl)lactate + NAD(+) = 3-(3,4-dihydroxyphenyl)pyruvate + NADH + H(+). Its function is as follows. Catalyzes the NAD(P)H-dependent reduction of 2-oxoglutarate, phenylpyruvate and (4-hydroxyphenyl)pyruvate, leading to the respective 2-hydroxycarboxylate in vitro. Shows a preference for NADPH over NADH as a redox partner. Do not catalyze the reverse reactions. The chain is Hydroxycarboxylate dehydrogenase B from Escherichia coli O157:H7.